The following is a 219-amino-acid chain: Ribose-5-phosphate isomerase A (219 aa).

Residues 28–31 (TGST), 81–84 (DGAD), and 94–97 (KGGG) each bind substrate. Glutamate 103 serves as the catalytic Proton acceptor. Lysine 121 contacts substrate.

Belongs to the ribose 5-phosphate isomerase family. Homodimer.

It catalyses the reaction aldehydo-D-ribose 5-phosphate = D-ribulose 5-phosphate. It functions in the pathway carbohydrate degradation; pentose phosphate pathway; D-ribose 5-phosphate from D-ribulose 5-phosphate (non-oxidative stage): step 1/1. Functionally, catalyzes the reversible conversion of ribose-5-phosphate to ribulose 5-phosphate. This is Ribose-5-phosphate isomerase A from Shewanella loihica (strain ATCC BAA-1088 / PV-4).